The following is a 219-amino-acid chain: Leucyl/phenylalanyl-tRNA--protein transferase (219 aa).

The protein belongs to the L/F-transferase family.

Its subcellular location is the cytoplasm. It carries out the reaction N-terminal L-lysyl-[protein] + L-leucyl-tRNA(Leu) = N-terminal L-leucyl-L-lysyl-[protein] + tRNA(Leu) + H(+). The catalysed reaction is N-terminal L-arginyl-[protein] + L-leucyl-tRNA(Leu) = N-terminal L-leucyl-L-arginyl-[protein] + tRNA(Leu) + H(+). The enzyme catalyses L-phenylalanyl-tRNA(Phe) + an N-terminal L-alpha-aminoacyl-[protein] = an N-terminal L-phenylalanyl-L-alpha-aminoacyl-[protein] + tRNA(Phe). Its function is as follows. Functions in the N-end rule pathway of protein degradation where it conjugates Leu, Phe and, less efficiently, Met from aminoacyl-tRNAs to the N-termini of proteins containing an N-terminal arginine or lysine. The sequence is that of Leucyl/phenylalanyl-tRNA--protein transferase from Leptospira borgpetersenii serovar Hardjo-bovis (strain JB197).